Here is a 497-residue protein sequence, read N- to C-terminus: MSQTARRLGPQDMFFLYSESSTTMMHVGALMPFTPPSGAPPDLLRQLVDESKASEVVEPWSLRLSHPELLYHPTQSWVVDDNFDLDYHVRRSALASPGDERELGIPVSRLHSHALDLRRPPWEVHFIEGLEGGRFAIYIKMHHSLIDGYTGQKMLARSLSTDPHDTTHPLFFNIPTPGRSPADTQDSVGGGLIAGAGNVLDGLGDVVRGLGGLVSGVGSVLGSVAGAGRSTFELTKALVNAQLRSDHEYRNLVGSVQAPHCILNTRISRNRRFATQQYPLDRLKAIGAQYDATINDVALAIIGGGLRRFLDELGELPNKSLIVVLPVNVRPKDDEGGGNAVATILATLGTDVADPVQRLAAVTASTRAAKAQLRSMDKDAILAYSAALMAPYGVQLASTLSGVKPPWPYTFNLCVSNVPGPEDVLYLRGSRMEASYPVSLVAHSQALNVTLQSYAGTLNFGFIGCRDTLPHLQRLAVYTGEALDQLAAADGAAGLGS.

The active-site Proton acceptor is the H143.

Belongs to the long-chain O-acyltransferase family.

The enzyme catalyses an acyl-CoA + a 1,2-diacyl-sn-glycerol = a triacyl-sn-glycerol + CoA. It catalyses the reaction di-(9Z)-octadecenoylglycerol + (9Z)-octadecenoyl-CoA = 1,2,3-tri-(9Z-octadecenoyl)-glycerol + CoA. It carries out the reaction hexadecan-1-ol + hexadecanoyl-CoA = hexadecanyl hexadecanoate + CoA. Its pathway is glycerolipid metabolism; triacylglycerol biosynthesis. Functionally, upon expression in E.coli has a weak triacylglycerol synthase function, making triacylglycerol (TG) from diolein and long-chain fatty acyl-CoA. Also functions weakly as a wax synthase, as it incorporates palmityl alcohol into wax esters in the presence of palmitoyl-CoA. In Mycobacterium tuberculosis (strain ATCC 25618 / H37Rv), this protein is Putative diacyglycerol O-acyltransferase Rv3480c.